The primary structure comprises 116 residues: Large ribosomal subunit protein bL19 (116 aa).

Belongs to the bacterial ribosomal protein bL19 family.

Its function is as follows. This protein is located at the 30S-50S ribosomal subunit interface and may play a role in the structure and function of the aminoacyl-tRNA binding site. This Pseudomonas putida (strain ATCC 700007 / DSM 6899 / JCM 31910 / BCRC 17059 / LMG 24140 / F1) protein is Large ribosomal subunit protein bL19.